The following is a 31-amino-acid chain: Photosystem II reaction center protein T (31 aa).

M1 carries the N-formylmethionine modification. The helical transmembrane segment at 3–23 (SVAYILVLTMALAVLFFAIAF) threads the bilayer.

This sequence belongs to the PsbT family. PSII is composed of 1 copy each of membrane proteins PsbA, PsbB, PsbC, PsbD, PsbE, PsbF, PsbH, PsbI, PsbJ, PsbK, PsbL, PsbM, PsbT, PsbX, PsbY, PsbZ, Psb30/Ycf12, peripheral proteins PsbO, CyanoQ (PsbQ), PsbU, PsbV and a large number of cofactors. It forms dimeric complexes.

The protein localises to the cellular thylakoid membrane. Its function is as follows. Found at the monomer-monomer interface of the photosystem II (PS II) dimer, plays a role in assembly and dimerization of PSII. PSII is a light-driven water plastoquinone oxidoreductase, using light energy to abstract electrons from H(2)O, generating a proton gradient subsequently used for ATP formation. The polypeptide is Photosystem II reaction center protein T (Synechocystis sp. (strain ATCC 27184 / PCC 6803 / Kazusa)).